A 309-amino-acid chain; its full sequence is MILLPFHTRRLVSHVYCGLKPASKKKGIALEMARPSSNLADFREAFAKAKHIAVITGAGVSAESGVPTFRGAGGYWRKWQAQHLATPEAFARNPSRVWEFYHYRREVMLTKNPNPAHLAIAECETRLRKQGRKLVVITQNIDELHRKAGSRNLFEIHGSLFKTRCTSCGSVKENYKSPICPALAGKGAPEPDVQDAKIPVEQLPRCDENGCNGLLRPNVVWFGETLDSNLLGEVEKELEICDLCVVVGTSSVVYPAAMFAPQVAARGVPVAEFNMENTPATTSFTFHFQGPCGTTLPPAIARHETELIS.

Residues 1–35 constitute a mitochondrion transit peptide; it reads MILLPFHTRRLVSHVYCGLKPASKKKGIALEMARP. The Deacetylase sirtuin-type domain occupies 36–306; that stretch reads SSNLADFREA…PPAIARHETE (271 aa). Residue 57 to 76 coordinates NAD(+); that stretch reads GAGVSAESGVPTFRGAGGYW. Positions 101 and 104 each coordinate substrate. 139–142 lines the NAD(+) pocket; the sequence is QNID. The active-site Proton acceptor is the histidine 157. Zn(2+) is bound by residues cysteine 165, cysteine 168, cysteine 206, and cysteine 211. NAD(+) contacts are provided by residues 248 to 250, 274 to 276, and cysteine 292; these read GTS and NME.

It belongs to the sirtuin family. Class III subfamily. Requires Zn(2+) as cofactor.

It is found in the mitochondrion. It localises to the cytoplasm. Its subcellular location is the cytosol. The protein resides in the nucleus. It carries out the reaction N(6)-malonyl-L-lysyl-[protein] + NAD(+) + H2O = 2''-O-malonyl-ADP-D-ribose + nicotinamide + L-lysyl-[protein]. The catalysed reaction is N(6)-succinyl-L-lysyl-[protein] + NAD(+) + H2O = 2''-O-succinyl-ADP-D-ribose + nicotinamide + L-lysyl-[protein]. The enzyme catalyses N(6)-glutaryl-L-lysyl-[protein] + NAD(+) + H2O = 2''-O-glutaryl-ADP-D-ribose + nicotinamide + L-lysyl-[protein]. In terms of biological role, NAD-dependent lysine demalonylase, desuccinylase and deglutarylase that specifically removes malonyl, succinyl and glutaryl groups on target proteins. Has weak NAD-dependent protein deacetylase activity; however this activity may not be physiologically relevant in vivo. This chain is NAD-dependent protein deacylase sirtuin-5, mitochondrial (sirt5), found in Xenopus tropicalis (Western clawed frog).